We begin with the raw amino-acid sequence, 136 residues long: Probable disulfide formation protein (136 aa).

A helical membrane pass occupies residues 7 to 26; the sequence is SYALYFAWAISCAGTLISIF. Cys-36 and Cys-39 form a disulfide bridge. 2 helical membrane-spanning segments follow: residues 41–60 and 67–84; these read YQRI…AYRE and YILP…YQVF. A disulfide bond links Cys-96 and Cys-101. A helical transmembrane segment spans residues 109 to 131; sequence SYVTIPMASVVAFGAIVCLLVLT.

It belongs to the DsbB family. BdbC subfamily.

It localises to the cell inner membrane. In terms of biological role, required for disulfide bond formation in some proteins. This chain is Probable disulfide formation protein, found in Chlamydia pneumoniae (Chlamydophila pneumoniae).